The primary structure comprises 242 residues: ATP synthase subunit a (242 aa).

The next 5 helical transmembrane spans lie at Leu28–Val48, Leu89–Ile109, Ile128–Ser148, Leu193–Leu213, and Gly214–Gly234.

This sequence belongs to the ATPase A chain family. As to quaternary structure, F-type ATPases have 2 components, CF(1) - the catalytic core - and CF(0) - the membrane proton channel. CF(1) has five subunits: alpha(3), beta(3), gamma(1), delta(1), epsilon(1). CF(0) has four main subunits: a, b, b' and c.

The protein localises to the cellular thylakoid membrane. In terms of biological role, key component of the proton channel; it plays a direct role in the translocation of protons across the membrane. The sequence is that of ATP synthase subunit a from Synechococcus sp. (strain WH7803).